The following is a 536-amino-acid chain: E3 ubiquitin-protein ligase Godzilla (536 aa).

The N-terminal stretch at 1–21 (MSKRSCQILTLLGLCLVCHEA) is a signal peptide. Residues 22 to 174 (TLVGGHVLVY…DELPFNINTQ (153 aa)) are Extracellular-facing. Positions 89–151 (FVALVARGEC…FVGHTTGKAL (63 aa)) constitute a PA domain. Residues asparagine 109 and asparagine 132 are each glycosylated (N-linked (GlcNAc...) asparagine). A helical transmembrane segment spans residues 175 to 195 (LILPFSILIGMCFIIMVIYMI). The Cytoplasmic segment spans residues 196–536 (YKCIREQRRL…HSASDRQFLI (341 aa)). Residues 235-277 (CVICLEDFIEDDKLRVLPCSHPYHTHCIDPWLTENRRVCPICK) form an RING-type; atypical zinc finger. Disordered stretches follow at residues 287-334 (RASR…GAAG) and 350-372 (HGTF…SDDE). A compositionally biased stretch (low complexity) spans 307 to 334 (TPLLQQQQSNGRQVGQVSSASSAGGAAG).

Belongs to the Godzilla family.

The protein resides in the endosome membrane. It catalyses the reaction S-ubiquitinyl-[E2 ubiquitin-conjugating enzyme]-L-cysteine + [acceptor protein]-L-lysine = [E2 ubiquitin-conjugating enzyme]-L-cysteine + N(6)-ubiquitinyl-[acceptor protein]-L-lysine.. The protein operates within protein modification; protein ubiquitination. Its function is as follows. Endosomal E3 ubiquitin-protein ligase that regulates the recycling endosome pathway by mediating ubiquitination of Synaptobrevin (Syb). Also acts as a regulator of transcytosis in wing imaginal disks by catalyzing ubiquitination of Syb: ubiquitination of Syb promotes transcytosis of wingless (wg) to the basolateral surface. The protein is E3 ubiquitin-protein ligase Godzilla of Drosophila melanogaster (Fruit fly).